Here is a 338-residue protein sequence, read N- to C-terminus: Glyceraldehyde-3-phosphate dehydrogenase 2 (338 aa).

NAD(+) is bound by residues Arg-11–Ile-12, Asp-33, and Arg-78. D-glyceraldehyde 3-phosphate-binding positions include Ser-149–Thr-151, Thr-180, Thr-209–Gly-210, and Arg-232. The active-site Nucleophile is Cys-150. Residue Asn-314 participates in NAD(+) binding.

It belongs to the glyceraldehyde-3-phosphate dehydrogenase family. Homotetramer.

Its subcellular location is the cytoplasm. It catalyses the reaction D-glyceraldehyde 3-phosphate + phosphate + NAD(+) = (2R)-3-phospho-glyceroyl phosphate + NADH + H(+). It participates in carbohydrate degradation; glycolysis; pyruvate from D-glyceraldehyde 3-phosphate: step 1/5. The sequence is that of Glyceraldehyde-3-phosphate dehydrogenase 2 (gpd2) from Agaricus bisporus (White button mushroom).